The chain runs to 671 residues: Pescadillo homolog (671 aa).

A BRCT domain is found at 317-403; sequence KVRELFRGLT…LMLPVTGYRI (87 aa). Residues 548 to 584 adopt a coiled-coil conformation; that stretch reads QALRKAQEKSRQTETSEARLQRKMSEVKRQEAATRKM. Disordered stretches follow at residues 552–578 and 643–671; these read KAQE…KRQE and RRQR…KWVQ.

This sequence belongs to the pescadillo family.

It is found in the nucleus. The protein resides in the nucleolus. The protein localises to the nucleoplasm. Required for maturation of ribosomal RNAs and formation of the large ribosomal subunit. In Leishmania infantum, this protein is Pescadillo homolog.